The sequence spans 147 residues: Hemoglobin subunit deltaH (147 aa).

One can recognise a Globin domain in the interval 3-147; the sequence is RLTDSEKAEV…MANALAHKYH (145 aa). Positions 64 and 93 each coordinate heme b.

It belongs to the globin family. In terms of assembly, heterotetramer of two delta chains and two alpha chains. Red blood cells.

This is Hemoglobin subunit deltaH from Heterohyrax brucei (Yellow-spotted hyrax).